The primary structure comprises 86 residues: MNIFGVGLPEVTVILILALLIFGPKKLPELGKQLGKTLKSLKKASNEFQNEIDQVMNEEDESPKSIESNQTNEINQEKIDSENSKK.

The helical transmembrane segment at 3-23 (IFGVGLPEVTVILILALLIFG) threads the bilayer. Positions 56–86 (MNEEDESPKSIESNQTNEINQEKIDSENSKK) are disordered. Residues 65 to 74 (SIESNQTNEI) show a composition bias toward polar residues. Basic and acidic residues predominate over residues 75-86 (NQEKIDSENSKK).

This sequence belongs to the TatA/E family. As to quaternary structure, forms a complex with TatC.

It is found in the cell inner membrane. In terms of biological role, part of the twin-arginine translocation (Tat) system that transports large folded proteins containing a characteristic twin-arginine motif in their signal peptide across membranes. TatA could form the protein-conducting channel of the Tat system. This is Sec-independent protein translocase protein TatA from Prochlorococcus marinus (strain MIT 9215).